A 146-amino-acid chain; its full sequence is D-aminoacyl-tRNA deacylase (146 aa).

A Gly-cisPro motif, important for rejection of L-amino acids motif is present at residues 137–138; sequence GP.

This sequence belongs to the DTD family. Homodimer.

Its subcellular location is the cytoplasm. The enzyme catalyses glycyl-tRNA(Ala) + H2O = tRNA(Ala) + glycine + H(+). It carries out the reaction a D-aminoacyl-tRNA + H2O = a tRNA + a D-alpha-amino acid + H(+). Functionally, an aminoacyl-tRNA editing enzyme that deacylates mischarged D-aminoacyl-tRNAs. Also deacylates mischarged glycyl-tRNA(Ala), protecting cells against glycine mischarging by AlaRS. Acts via tRNA-based rather than protein-based catalysis; rejects L-amino acids rather than detecting D-amino acids in the active site. By recycling D-aminoacyl-tRNA to D-amino acids and free tRNA molecules, this enzyme counteracts the toxicity associated with the formation of D-aminoacyl-tRNA entities in vivo and helps enforce protein L-homochirality. This chain is D-aminoacyl-tRNA deacylase, found in Hahella chejuensis (strain KCTC 2396).